Consider the following 168-residue polypeptide: NADH-ubiquinone oxidoreductase chain 6 (168 aa).

5 helical membrane-spanning segments follow: residues 26–46, 52–72, 82–102, 111–131, and 134–154; these read LGLMLMLMVLCVSGLTSLIIF, LLFLVYVGGMLVMFMYVISLI, VFAYFFFIFFGFMMMNFFVMK, SMSLFDYGYMSMGGSGIIMLY, and FFCYVLLAVILLFVLISVVKI.

This sequence belongs to the complex I subunit 6 family.

It is found in the mitochondrion membrane. It carries out the reaction a ubiquinone + NADH + 5 H(+)(in) = a ubiquinol + NAD(+) + 4 H(+)(out). In terms of biological role, core subunit of the mitochondrial membrane respiratory chain NADH dehydrogenase (Complex I) that is believed to belong to the minimal assembly required for catalysis. Complex I functions in the transfer of electrons from NADH to the respiratory chain. The immediate electron acceptor for the enzyme is believed to be ubiquinone. This chain is NADH-ubiquinone oxidoreductase chain 6 (ND6), found in Heterololigo bleekeri (Spear squid).